A 173-amino-acid chain; its full sequence is Ferric citrate uptake sigma factor FecI (173 aa).

A Polymerase core binding motif is present at residues 40–52 (DIAQDTFLRVMVS). The segment at residues 139 to 158 (YSEIAHKLGVSISSVKKYVA) is a DNA-binding region (H-T-H motif).

Belongs to the sigma-70 factor family. ECF subfamily. As to quaternary structure, interacts with FecR (via cytoplasmic N-terminus).

In terms of biological role, sigma factors are initiation factors that promote the attachment of RNA polymerase to specific initiation sites and are then released. This sigma factor regulates transcriptional activation of the fecABCDE operon which mediates ferric citrate transport. The chain is Ferric citrate uptake sigma factor FecI (fecI) from Escherichia coli (strain K12).